A 548-amino-acid polypeptide reads, in one-letter code: Formyltransferase/hydrolase complex Fhc subunit A (548 aa).

Zn(2+)-binding residues include histidine 57, histidine 59, and histidine 227.

It belongs to the metallo-dependent hydrolases superfamily. FwdA/FmdA family. As to quaternary structure, octaheteromer. Part of the formyltransferase/hydrolase complex fhc; composed of FhcA, FhcB, FhcC and FhcD. Zn(2+) serves as cofactor.

Its subcellular location is the cytoplasm. The enzyme catalyses N-formylmethanofuran + H2O = methanofuran + formate. Its pathway is one-carbon metabolism; formaldehyde degradation; formate from formaldehyde (H(4)MPT route): step 4/5. In terms of biological role, involved in the transformation of 5-formyl tetrahydromethanopterin (5-formyl-H(4)MPT) to methanofuran (MFR) and formate via the formylmethanofuran (formyl-MFR). May be catalyze the hydrolysis of formylmethanofuran (formyl-MFR) to yield formate and MFR. The chain is Formyltransferase/hydrolase complex Fhc subunit A (fhcA) from Methylorubrum extorquens (strain ATCC 14718 / DSM 1338 / JCM 2805 / NCIMB 9133 / AM1) (Methylobacterium extorquens).